The chain runs to 219 residues: Deoxyribose-phosphate aldolase (219 aa).

The active-site Proton donor/acceptor is the Asp89. Lys151 (schiff-base intermediate with acetaldehyde) is an active-site residue. Lys180 serves as the catalytic Proton donor/acceptor.

It belongs to the DeoC/FbaB aldolase family. DeoC type 1 subfamily.

It is found in the cytoplasm. The catalysed reaction is 2-deoxy-D-ribose 5-phosphate = D-glyceraldehyde 3-phosphate + acetaldehyde. The protein operates within carbohydrate degradation; 2-deoxy-D-ribose 1-phosphate degradation; D-glyceraldehyde 3-phosphate and acetaldehyde from 2-deoxy-alpha-D-ribose 1-phosphate: step 2/2. Functionally, catalyzes a reversible aldol reaction between acetaldehyde and D-glyceraldehyde 3-phosphate to generate 2-deoxy-D-ribose 5-phosphate. This chain is Deoxyribose-phosphate aldolase, found in Coprothermobacter proteolyticus (strain ATCC 35245 / DSM 5265 / OCM 4 / BT).